Reading from the N-terminus, the 240-residue chain is uncharacterized protein (240 aa).

The N-terminal stretch at 1 to 18 is a signal peptide; it reads MTRYTYLFILQIISCSFA. N127 carries an N-linked (GlcNAc...) asparagine glycan. A helical membrane pass occupies residues 215 to 235; it reads GFISSSQLPQFVYLIVFTIIG.

The protein localises to the membrane. This is an uncharacterized protein from Caenorhabditis elegans.